Reading from the N-terminus, the 724-residue chain is Propionyl-CoA carboxylase alpha chain, mitochondrial (724 aa).

In terms of domain architecture, Biotin carboxylation spans Lys-48 to Pro-495. ATP contacts are provided by residues Lys-163, Ser-195–Ile-256, Glu-247, and Asn-282. The region spanning Lys-167–Tyr-364 is the ATP-grasp domain. Mg(2+) contacts are provided by Glu-322, Glu-335, and Asn-337. Positions 322, 335, and 337 each coordinate Mn(2+). Arg-339 is an active-site residue. Phe-395 provides a ligand contact to biotin. The 76-residue stretch at Lys-649–Glu-724 folds into the Biotinyl-binding domain. Lys-690 is modified (N6-biotinyllysine).

The holoenzyme is a dodecamer composed of 6 alpha subunits and 6 beta subunits. Interacts with sir-2.2 and sir-2.3. Biotin is required as a cofactor. Requires Mg(2+) as cofactor. The cofactor is Mn(2+). Post-translationally, the biotin cofactor is covalently attached to the C-terminal biotinyl-binding domain and is required for the catalytic activity.

Its subcellular location is the mitochondrion matrix. The enzyme catalyses propanoyl-CoA + hydrogencarbonate + ATP = (S)-methylmalonyl-CoA + ADP + phosphate + H(+). It carries out the reaction butanoyl-CoA + hydrogencarbonate + ATP = (2S)-ethylmalonyl-CoA + ADP + phosphate + H(+). The protein operates within metabolic intermediate metabolism; propanoyl-CoA degradation; succinyl-CoA from propanoyl-CoA: step 1/3. In terms of biological role, this is one of the 2 subunits of the biotin-dependent propionyl-CoA carboxylase (PCC), a mitochondrial enzyme involved in the catabolism of odd chain fatty acids, branched-chain amino acids isoleucine, threonine, methionine, and valine and other metabolites. Propionyl-CoA carboxylase catalyzes the carboxylation of propionyl-CoA/propanoyl-CoA to D-methylmalonyl-CoA/(S)-methylmalonyl-CoA. Within the holoenzyme, the alpha subunit catalyzes the ATP-dependent carboxylation of the biotin carried by the biotin carboxyl carrier (BCC) domain, while the beta subunit then transfers the carboxyl group from carboxylated biotin to propionyl-CoA. Propionyl-CoA carboxylase also significantly acts on butyryl-CoA/butanoyl-CoA, which is converted to ethylmalonyl-CoA/(2S)-ethylmalonyl-CoA. Other alternative minor substrates include (2E)-butenoyl-CoA/crotonoyl-CoA. This Caenorhabditis elegans protein is Propionyl-CoA carboxylase alpha chain, mitochondrial (pcca-1).